Consider the following 82-residue polypeptide: DNA-directed RNA polymerase subunit Rpo5 (82 aa).

This sequence belongs to the archaeal Rpo5/eukaryotic RPB5 RNA polymerase subunit family. Part of the RNA polymerase complex.

It localises to the cytoplasm. It carries out the reaction RNA(n) + a ribonucleoside 5'-triphosphate = RNA(n+1) + diphosphate. Functionally, DNA-dependent RNA polymerase (RNAP) catalyzes the transcription of DNA into RNA using the four ribonucleoside triphosphates as substrates. The protein is DNA-directed RNA polymerase subunit Rpo5 of Thermococcus kodakarensis (strain ATCC BAA-918 / JCM 12380 / KOD1) (Pyrococcus kodakaraensis (strain KOD1)).